The following is a 393-amino-acid chain: Lipid-A-disaccharide synthase (393 aa).

The protein belongs to the LpxB family.

The catalysed reaction is a lipid X + a UDP-2-N,3-O-bis[(3R)-3-hydroxyacyl]-alpha-D-glucosamine = a lipid A disaccharide + UDP + H(+). It participates in bacterial outer membrane biogenesis; LPS lipid A biosynthesis. Functionally, condensation of UDP-2,3-diacylglucosamine and 2,3-diacylglucosamine-1-phosphate to form lipid A disaccharide, a precursor of lipid A, a phosphorylated glycolipid that anchors the lipopolysaccharide to the outer membrane of the cell. The protein is Lipid-A-disaccharide synthase of Bordetella pertussis (strain Tohama I / ATCC BAA-589 / NCTC 13251).